We begin with the raw amino-acid sequence, 171 residues long: Large ribosomal subunit protein uL22 (171 aa).

Belongs to the universal ribosomal protein uL22 family.

The sequence is that of Large ribosomal subunit protein uL22 (RPL17) from Zea mays (Maize).